The following is an 823-amino-acid chain: Leucine--tRNA ligase (823 aa).

The 'HIGH' region signature appears at P42–H52. Positions K575–S579 match the 'KMSKS' region motif. K578 lines the ATP pocket.

This sequence belongs to the class-I aminoacyl-tRNA synthetase family.

The protein resides in the cytoplasm. The catalysed reaction is tRNA(Leu) + L-leucine + ATP = L-leucyl-tRNA(Leu) + AMP + diphosphate. This Legionella pneumophila (strain Lens) protein is Leucine--tRNA ligase.